Consider the following 264-residue polypeptide: Thymidylate synthase (264 aa).

Arginine 21 is a dUMP binding site. Histidine 51 contacts (6R)-5,10-methylene-5,6,7,8-tetrahydrofolate. 126-127 (RR) contacts dUMP. Cysteine 146 functions as the Nucleophile in the catalytic mechanism. Residues 166–169 (RSCD), asparagine 177, and 207–209 (HLY) contribute to the dUMP site. Residue aspartate 169 participates in (6R)-5,10-methylene-5,6,7,8-tetrahydrofolate binding. Alanine 263 lines the (6R)-5,10-methylene-5,6,7,8-tetrahydrofolate pocket.

This sequence belongs to the thymidylate synthase family. Bacterial-type ThyA subfamily. As to quaternary structure, homodimer.

It localises to the cytoplasm. It carries out the reaction dUMP + (6R)-5,10-methylene-5,6,7,8-tetrahydrofolate = 7,8-dihydrofolate + dTMP. Its pathway is pyrimidine metabolism; dTTP biosynthesis. In terms of biological role, catalyzes the reductive methylation of 2'-deoxyuridine-5'-monophosphate (dUMP) to 2'-deoxythymidine-5'-monophosphate (dTMP) while utilizing 5,10-methylenetetrahydrofolate (mTHF) as the methyl donor and reductant in the reaction, yielding dihydrofolate (DHF) as a by-product. This enzymatic reaction provides an intracellular de novo source of dTMP, an essential precursor for DNA biosynthesis. The sequence is that of Thymidylate synthase from Shewanella baltica (strain OS223).